Here is a 189-residue protein sequence, read N- to C-terminus: UPF0149 protein VSAL_I2539 (189 aa).

The protein belongs to the UPF0149 family.

In Aliivibrio salmonicida (strain LFI1238) (Vibrio salmonicida (strain LFI1238)), this protein is UPF0149 protein VSAL_I2539.